Consider the following 386-residue polypeptide: Synaptotagmin-5 (386 aa).

Over residues 1 to 16 (MFPEPPTPGPPSPDTP) the composition is skewed to pro residues. A disordered region spans residues 1 to 23 (MFPEPPTPGPPSPDTPPDSSRIS). Residues 1-24 (MFPEPPTPGPPSPDTPPDSSRISH) are Vesicular-facing. The chain crosses the membrane as a helical span at residues 25–45 (GPVPPWALATIVLVSGLLIFS). At 46-386 (CCFCLYRKSC…PDRVRLLPAP (341 aa)) the chain is on the cytoplasmic side. C2 domains are found at residues 108–227 (ELGR…QAWR) and 239–372 (KLGD…AQWH). Positions 138, 139, 145, 197, 198, 199, 202, 205, 270, 276, 330, and 332 each coordinate Ca(2+).

It belongs to the synaptotagmin family. Homodimer. Interacts with both alpha- and beta-tubulin. It depends on Ca(2+) as a cofactor.

It is found in the cytoplasmic vesicle. It localises to the secretory vesicle. Its subcellular location is the synaptic vesicle membrane. The protein localises to the recycling endosome membrane. In terms of biological role, may be involved in Ca(2+)-dependent exocytosis of secretory vesicles through Ca(2+) and phospholipid binding to the C2 domain or may serve as Ca(2+) sensors in the process of vesicular trafficking and exocytosis. Regulates the Ca(2+)-dependent secretion of norepinephrine in PC12 cells. Required for export from the endocytic recycling compartment to the cell surface. The chain is Synaptotagmin-5 (SYT5) from Homo sapiens (Human).